We begin with the raw amino-acid sequence, 194 residues long: Inosine triphosphate pyrophosphatase (194 aa).

At Ala-2 the chain carries N-acetylalanine. 14-19 (TGNAKK) lines the ITP pocket. Glu-44 contacts Mg(2+). Residues Lys-56, 72–73 (DT), Lys-89, 149–152 (FGWD), Lys-172, and 177–178 (HR) contribute to the ITP site.

Belongs to the HAM1 NTPase family. As to quaternary structure, homodimer. It depends on Mg(2+) as a cofactor. In terms of tissue distribution, ubiquitous. Highly expressed in heart, liver, sex glands, thyroid and adrenal gland.

Its subcellular location is the cytoplasm. The enzyme catalyses ITP + H2O = IMP + diphosphate + H(+). It carries out the reaction dITP + H2O = dIMP + diphosphate + H(+). The catalysed reaction is XTP + H2O = XMP + diphosphate + H(+). It catalyses the reaction N(6)-hydroxy-dATP + H2O = N(6)-hydroxy-dAMP + diphosphate + H(+). In terms of biological role, pyrophosphatase that hydrolyzes the non-canonical purine nucleotides inosine triphosphate (ITP), deoxyinosine triphosphate (dITP) as well as 2'-deoxy-N-6-hydroxylaminopurine triphosphate (dHAPTP) and xanthosine 5'-triphosphate (XTP) to their respective monophosphate derivatives. The enzyme does not distinguish between the deoxy- and ribose forms. Probably excludes non-canonical purines from RNA and DNA precursor pools, thus preventing their incorporation into RNA and DNA and avoiding chromosomal lesions. The chain is Inosine triphosphate pyrophosphatase from Homo sapiens (Human).